Consider the following 38-residue polypeptide: Photosystem II reaction center protein L (38 aa).

Residues 17–37 (SLYWGLLLIFVLAVLFSSYIF) form a helical membrane-spanning segment.

The protein belongs to the PsbL family. In terms of assembly, PSII is composed of 1 copy each of membrane proteins PsbA, PsbB, PsbC, PsbD, PsbE, PsbF, PsbH, PsbI, PsbJ, PsbK, PsbL, PsbM, PsbT, PsbX, PsbY, PsbZ, Psb30/Ycf12, at least 3 peripheral proteins of the oxygen-evolving complex and a large number of cofactors. It forms dimeric complexes.

The protein resides in the plastid. It localises to the chloroplast thylakoid membrane. Its function is as follows. One of the components of the core complex of photosystem II (PSII). PSII is a light-driven water:plastoquinone oxidoreductase that uses light energy to abstract electrons from H(2)O, generating O(2) and a proton gradient subsequently used for ATP formation. It consists of a core antenna complex that captures photons, and an electron transfer chain that converts photonic excitation into a charge separation. This subunit is found at the monomer-monomer interface and is required for correct PSII assembly and/or dimerization. In Tetradesmus obliquus (Green alga), this protein is Photosystem II reaction center protein L.